A 364-amino-acid chain; its full sequence is MLIFPLINDTSRKIIHIDMDAFFAAVEERDNPALKGKPVVIGKDPRETGGRGVVSTCNYEARKYGIHSAMSSKEAYERCPKAIFISGNYEKYRTVGDQIRRIFKRYTDVVEPMSIDEAYLDVTNNKLGIKSAVKIAKLIQHDIWKEVGLTCSAGVSYNKFLAKLASDFEKPHGLTLVLKEDALCFLAKLPIEKFHGVGKKSVEKLHDMGIYTGQDLLAVPEMTLIDHFGRFGFDLYRKARGISNSPVKSDRIRKSIGSERTYAKLLYQETDIKAEISKNAKRVAALLQDHKKLGKTIVLKVRYADFTTLTKRVTLPELTRNAAQIEQVAGDIFDSLSENPAGIRLLGVTMTNLEDKVADISLDL.

Positions 14 to 198 constitute a UmuC domain; that stretch reads IIHIDMDAFF…LPIEKFHGVG (185 aa). The Mg(2+) site is built by Asp-18 and Asp-116. The active site involves Glu-117.

This sequence belongs to the DNA polymerase type-Y family. As to quaternary structure, monomer. Requires Mg(2+) as cofactor.

The protein localises to the cytoplasm. The catalysed reaction is DNA(n) + a 2'-deoxyribonucleoside 5'-triphosphate = DNA(n+1) + diphosphate. Poorly processive, error-prone DNA polymerase involved in untargeted mutagenesis. Copies undamaged DNA at stalled replication forks, which arise in vivo from mismatched or misaligned primer ends. These misaligned primers can be extended by PolIV. Exhibits no 3'-5' exonuclease (proofreading) activity. May be involved in translesional synthesis, in conjunction with the beta clamp from PolIII. This is DNA polymerase IV from Streptococcus pyogenes serotype M6 (strain ATCC BAA-946 / MGAS10394).